We begin with the raw amino-acid sequence, 392 residues long: Queuine tRNA-ribosyltransferase (392 aa).

The active-site Proton acceptor is the Asp-93. Residues 93-97 (DSGGY), Asp-147, Gln-189, and Gly-216 each bind substrate. Positions 247-253 (GVGAPED) are RNA binding. Asp-266 (nucleophile) is an active-site residue. An RNA binding; important for wobble base 34 recognition region spans residues 271 to 275 (TRVAR). 4 residues coordinate Zn(2+): Cys-304, Cys-306, Cys-309, and His-335.

This sequence belongs to the queuine tRNA-ribosyltransferase family. Homodimer. Within each dimer, one monomer is responsible for RNA recognition and catalysis, while the other monomer binds to the replacement base PreQ1. It depends on Zn(2+) as a cofactor.

It catalyses the reaction 7-aminomethyl-7-carbaguanine + guanosine(34) in tRNA = 7-aminomethyl-7-carbaguanosine(34) in tRNA + guanine. The protein operates within tRNA modification; tRNA-queuosine biosynthesis. In terms of biological role, catalyzes the base-exchange of a guanine (G) residue with the queuine precursor 7-aminomethyl-7-deazaguanine (PreQ1) at position 34 (anticodon wobble position) in tRNAs with GU(N) anticodons (tRNA-Asp, -Asn, -His and -Tyr). Catalysis occurs through a double-displacement mechanism. The nucleophile active site attacks the C1' of nucleotide 34 to detach the guanine base from the RNA, forming a covalent enzyme-RNA intermediate. The proton acceptor active site deprotonates the incoming PreQ1, allowing a nucleophilic attack on the C1' of the ribose to form the product. After dissociation, two additional enzymatic reactions on the tRNA convert PreQ1 to queuine (Q), resulting in the hypermodified nucleoside queuosine (7-(((4,5-cis-dihydroxy-2-cyclopenten-1-yl)amino)methyl)-7-deazaguanosine). This is Queuine tRNA-ribosyltransferase from Dehalococcoides mccartyi (strain ATCC BAA-2100 / JCM 16839 / KCTC 5957 / BAV1).